The chain runs to 307 residues: MAKEGTKVPRIKLGSQGLEVSAQGLGCMGMSAFYGPPKPEPDMIQLIHHAINSGITLLDTSDVYGPHTNEILLGKALKGGTRERVVLATKFGIVLGDEKKAEGKRAVHGDPAYVRAACEASLKRLDIDCIDLYYQHRVDTRVPIEITVGELKKLVEEGKLKYIGLSEASASTIRRAHAVHPITAVQLEWSLWSRDVEEEIIPTCRELGIGIVAYSPLGRGFLSSGPKLLEDMSNEDYRKYLPRFQAENLENNKNLYERICEMAVRKGCTPSQLALAWVHHQGNDVCPIPGTTKIENLNQNMKPCPSS.

Tyrosine 64 functions as the Proton donor in the catalytic mechanism. Histidine 136 serves as a coordination point for substrate. Residue 215–225 (SPLGRGFLSSG) coordinates NADP(+).

It belongs to the aldo/keto reductase family. Aldo/keto reductase 2 subfamily.

The sequence is that of Auxin-induced protein PCNT115 from Nicotiana tabacum (Common tobacco).